We begin with the raw amino-acid sequence, 495 residues long: MRTGFDRDLYVRMQSQHINERREQIGGKLYLEMGGKLFDDLHASRVLPGFTPDNKIAMLEQLKDELEILVTINAKDLQRNKTRADLDISYEDDVLRLIDVFREAGFLTEHVVLTQLEDDNYQAMQFIQRLERLGIKVARHRVIPGYPTDARRIVSEEGFGRNEYVETTRNLVVVTAPGPGSGKLATCLSQIYGDHQRGISSGYAKFETFPIWDLPLEHPVNLAYEAATADLDDINVIDPFHLTAYGEKATSYNRDVEVFPLLKTMLEMLSGSSPYQSPTDMGVNMVGSAIADDEVCREAARQEIVRRYFKALVDERRDELDDTVSSRIAIVMSKAGCSVEDRTVVARALELESETGAPASAILLDDGRIVTGKTSALLGCSAAMLLNALKELAGIDPSIDLLSPESIEPIQTLKTEHLGSRNPRLHTDEVLIALSVSAAASDNARRALDQLKNLRGCDVHTTTILGSVDEGIFRNLGVLVTSEPKYQRKALYRKR.

Belongs to the UPF0371 family.

In Corynebacterium efficiens (strain DSM 44549 / YS-314 / AJ 12310 / JCM 11189 / NBRC 100395), this protein is UPF0371 protein CE2832.